The primary structure comprises 823 residues: Ciliated left-right organizer ZP-N domains-containing protein (823 aa).

The N-terminal stretch at 1 to 22 (MWGSPALAWAVWLACVQPTVFP) is a signal peptide. Disordered regions lie at residues 206–242 (MGLY…LLPL), 269–422 (LVHI…DLLH), 434–520 (GPFL…SPSP), and 632–656 (LPRE…EGPG). Residues 216 to 230 (TVTVQSPRQGLLQRW) are compositionally biased toward pro residues. A compositionally biased stretch (low complexity) spans 389–402 (GPETPPAGVPPAAS).

It is found in the secreted. Functionally, plays a role in left-right patterning process. This chain is Ciliated left-right organizer ZP-N domains-containing protein, found in Homo sapiens (Human).